The chain runs to 298 residues: GTPase Era (298 aa).

Residues 3–170 (KSGFVAILGR…IKLLTDNLEE (168 aa)) enclose the Era-type G domain. The segment at 11-18 (GRPNVGKS) is G1. 11–18 (GRPNVGKS) is a GTP binding site. Positions 37–41 (QTTRN) are G2. Residues 58–61 (DTPG) are G3. Residues 58–62 (DTPGI) and 120–123 (NKID) each bind GTP. A G4 region spans residues 120–123 (NKID). The segment at 149–151 (ISA) is G5. One can recognise a KH type-2 domain in the interval 201–279 (TQQEVPHSVA…YLETWVKVKK (79 aa)).

Belongs to the TRAFAC class TrmE-Era-EngA-EngB-Septin-like GTPase superfamily. Era GTPase family. In terms of assembly, monomer.

The protein resides in the cytoplasm. It is found in the cell membrane. In terms of biological role, an essential GTPase that binds both GDP and GTP, with rapid nucleotide exchange. Plays a role in 16S rRNA processing and 30S ribosomal subunit biogenesis and possibly also in cell cycle regulation and energy metabolism. In Streptococcus pyogenes serotype M4 (strain MGAS10750), this protein is GTPase Era.